We begin with the raw amino-acid sequence, 207 residues long: Oligoribonuclease (207 aa).

Positions 20–183 (LVWLDMEMTG…ADIHESIDEL (164 aa)) constitute an Exonuclease domain. Y141 is an active-site residue.

Belongs to the oligoribonuclease family.

The protein resides in the cytoplasm. In terms of biological role, 3'-to-5' exoribonuclease specific for small oligoribonucleotides. This is Oligoribonuclease from Paraburkholderia xenovorans (strain LB400).